The primary structure comprises 459 residues: Ribulose bisphosphate carboxylase (459 aa).

Substrate is bound at residue Asn111. The active-site Proton acceptor is the Lys166. Residue Lys168 participates in substrate binding. 3 residues coordinate Mg(2+): Lys191, Asp193, and Glu194. Lys191 is modified (N6-carboxylysine). The active-site Proton acceptor is His287. Substrate-binding residues include Arg288, His321, and Ser368.

The protein belongs to the RuBisCO large chain family. Type II subfamily. In terms of assembly, homodimer. It depends on Mg(2+) as a cofactor.

The catalysed reaction is 2 (2R)-3-phosphoglycerate + 2 H(+) = D-ribulose 1,5-bisphosphate + CO2 + H2O. The enzyme catalyses D-ribulose 1,5-bisphosphate + O2 = 2-phosphoglycolate + (2R)-3-phosphoglycerate + 2 H(+). Functionally, ruBisCO catalyzes two reactions: the carboxylation of D-ribulose 1,5-bisphosphate, the primary event in carbon dioxide fixation, as well as the oxidative fragmentation of the pentose substrate. Both reactions occur simultaneously and in competition at the same active site. This is Ribulose bisphosphate carboxylase from Cereibacter sphaeroides (strain ATCC 17029 / ATH 2.4.9) (Rhodobacter sphaeroides).